The primary structure comprises 382 residues: D-galactonate dehydratase (382 aa).

Residue Asp183 coordinates Mg(2+). Catalysis depends on His185, which acts as the Proton donor. Glu209 and Glu235 together coordinate Mg(2+). His285 (proton acceptor) is an active-site residue.

Belongs to the mandelate racemase/muconate lactonizing enzyme family. GalD subfamily. Mg(2+) is required as a cofactor.

The enzyme catalyses D-galactonate = 2-dehydro-3-deoxy-D-galactonate + H2O. It functions in the pathway carbohydrate acid metabolism; D-galactonate degradation; D-glyceraldehyde 3-phosphate and pyruvate from D-galactonate: step 1/3. Functionally, catalyzes the dehydration of D-galactonate to 2-keto-3-deoxy-D-galactonate. This Cronobacter sakazakii (strain ATCC BAA-894) (Enterobacter sakazakii) protein is D-galactonate dehydratase.